The sequence spans 334 residues: Large ribosomal subunit protein uL3 (334 aa).

Basic residues predominate over residues 1-10 (MGMKKNRPRR). Positions 1–21 (MGMKKNRPRRGSLAFSPRKRA) are disordered.

It belongs to the universal ribosomal protein uL3 family. In terms of assembly, part of the 50S ribosomal subunit. Forms a cluster with proteins L14 and L24e.

Its function is as follows. One of the primary rRNA binding proteins, it binds directly near the 3'-end of the 23S rRNA, where it nucleates assembly of the 50S subunit. This Methanococcus maripaludis (strain DSM 14266 / JCM 13030 / NBRC 101832 / S2 / LL) protein is Large ribosomal subunit protein uL3.